The chain runs to 125 residues: Neuropeptide B (125 aa).

Positions 1–24 (MARSATLAAAALALCLLLAPPGLA) are cleaved as a signal peptide. Positions 54 to 73 (RRSQPYRGAEPPGGAGASPE) are disordered. A propeptide spanning residues 56–125 (SQPYRGAEPP…SLRAADCLAA (70 aa)) is cleaved from the precursor.

Belongs to the neuropeptide B/W family. As to expression, widely expressed in the central nervous system. High levels are found in substantia nigra, hypothalamus, hippocampus, spinal cord, placenta and fetal brain; lower levels are found in testis, uterus and ovary. Also detected at high levels in colorectal adenocarcinoma.

The protein localises to the secreted. May be involved in the regulation of feeding, neuroendocrine system, memory, learning and in the afferent pain pathway. In Homo sapiens (Human), this protein is Neuropeptide B (NPB).